A 164-amino-acid chain; its full sequence is Endoribonuclease YbeY (164 aa).

Zn(2+) is bound by residues His125, His129, and His135.

The protein belongs to the endoribonuclease YbeY family. It depends on Zn(2+) as a cofactor.

The protein resides in the cytoplasm. In terms of biological role, single strand-specific metallo-endoribonuclease involved in late-stage 70S ribosome quality control and in maturation of the 3' terminus of the 16S rRNA. The chain is Endoribonuclease YbeY from Paramagnetospirillum magneticum (strain ATCC 700264 / AMB-1) (Magnetospirillum magneticum).